Here is a 238-residue protein sequence, read N- to C-terminus: Sugar fermentation stimulation protein homolog (238 aa).

Belongs to the SfsA family.

The protein is Sugar fermentation stimulation protein homolog of Shewanella denitrificans (strain OS217 / ATCC BAA-1090 / DSM 15013).